A 255-amino-acid polypeptide reads, in one-letter code: tRNA (guanine-N(7)-)-methyltransferase (255 aa).

The interval 1-30 (MMHDDPNEAGLPPDDAALPDEAADGADEVN) is disordered. Residues 17–27 (ALPDEAADGAD) show a composition bias toward acidic residues. S-adenosyl-L-methionine is bound by residues glutamate 86, glutamate 111, aspartate 138, and aspartate 161. Aspartate 161 is an active-site residue. Substrate contacts are provided by residues lysine 165, aspartate 197, and 232-235 (TKFE).

It belongs to the class I-like SAM-binding methyltransferase superfamily. TrmB family.

It catalyses the reaction guanosine(46) in tRNA + S-adenosyl-L-methionine = N(7)-methylguanosine(46) in tRNA + S-adenosyl-L-homocysteine. Its pathway is tRNA modification; N(7)-methylguanine-tRNA biosynthesis. Its function is as follows. Catalyzes the formation of N(7)-methylguanine at position 46 (m7G46) in tRNA. This Burkholderia vietnamiensis (strain G4 / LMG 22486) (Burkholderia cepacia (strain R1808)) protein is tRNA (guanine-N(7)-)-methyltransferase.